Reading from the N-terminus, the 162-residue chain is UPF0114 protein Psyr_4257 (162 aa).

4 helical membrane passes run 15-35 (LLAP…LKFF), 53-73 (LILV…LVMV), 109-129 (VAAS…MDAT), and 136-156 (LMWY…MGYL).

Belongs to the UPF0114 family.

It is found in the cell membrane. The chain is UPF0114 protein Psyr_4257 from Pseudomonas syringae pv. syringae (strain B728a).